The following is a 351-amino-acid chain: uncharacterized protein (351 aa).

Mn(2+)-binding residues include Asp-215, Asp-226, His-290, Glu-319, and Glu-333.

This sequence belongs to the peptidase M24B family. Requires Mn(2+) as cofactor.

This is an uncharacterized protein from Staphylococcus aureus (strain bovine RF122 / ET3-1).